A 1491-amino-acid chain; its full sequence is Terminal uridylyltransferase 7 (1491 aa).

Phosphothreonine is present on T64. 2 positions are modified to phosphoserine: S132 and S172. Residues 165–203 (MSEMEAGSPENKKQRSRPRKPRRTRTEDSEQDGDLDGPV) are disordered. The segment covering 178 to 187 (QRSRPRKPRR) has biased composition (basic residues). The segment at 244–274 (YTCKLCDALIDSIPFAHKHIKEKRHKKNLKE) adopts a Matrin-type zinc-finger fold. Residues 551 to 600 (VGQLWVELLRFYALEFNLADLVISIRVKELISRESKDWPKKRIAIEDPYS) form the PAP-associated 1 domain. Residues S600 and S747 each carry the phosphoserine modification. 2 disordered regions span residues 740-774 (AELPETGSDNEEVRRKTKHPLSTDDQGLSSSKHPE) and 834-911 (QSRT…CGEN). Positions 844-857 (DDEEEEEEEEEEEE) are enriched in acidic residues. T865 bears the Phosphothreonine mark. A compositionally biased stretch (acidic residues) spans 885–897 (GEEDALSEEDDLA). S891 is modified (phosphoserine). The segment at 947–1491 (RKLTFTKGKS…ASVKRTQQES (545 aa)) is sufficient for monouridylation activity. Residues 959–976 (VVCSLCKREGHLKKDCPE) form a CCHC-type 1 zinc finger. UTP is bound by residues 1043 to 1046 (SSKN), 1053 to 1056 (SDLD), N1126, K1148, 1166 to 1170 (SYAYT), and H1282. 2 residues coordinate Mg(2+): D1054 and D1056. In terms of domain architecture, PAP-associated 2 spans 1230-1282 (VGQLWLGLLRFYTEEFDFKEHVISIRRKSLLTTFKKQWTSKYIVIEDPFDLNH). The CCHC-type 2 zinc finger occupies 1341–1358 (RCCRICGKIGHFMKDCPM). Disordered regions lie at residues 1362–1399 (VRRRRDQEDTPNQRYSESKEKRSKEDKEIQNKYTEKEV) and 1463–1491 (PQFKGSPGSLSSKYMTQGRASVKRTQQES). The segment covering 1377–1399 (SESKEKRSKEDKEIQNKYTEKEV) has biased composition (basic and acidic residues). A CCHC-type 3 zinc finger spans residues 1447–1464 (KRCFICGREGHIKKECPQ). Residues 1470 to 1481 (GSLSSKYMTQGR) are compositionally biased toward polar residues.

Belongs to the DNA polymerase type-B-like family. It depends on Mg(2+) as a cofactor. Mn(2+) serves as cofactor.

The protein resides in the cytoplasm. It carries out the reaction RNA(n) + UTP = RNA(n)-3'-uridine ribonucleotide + diphosphate. Its function is as follows. Uridylyltransferase that mediates the terminal uridylation of mRNAs with short (less than 25 nucleotides) poly(A) tails, hence facilitating global mRNA decay. Essential for both oocyte maturation and fertility. Through 3' terminal uridylation of mRNA, sculpts, with TUT7, the maternal transcriptome by eliminating transcripts during oocyte growth. Involved in microRNA (miRNA)-induced gene silencing through uridylation of deadenylated miRNA targets. Also acts as a suppressor of miRNA biogenesis by mediating the terminal uridylation of miRNA precursors, including that of let-7 (pre-let-7). Uridylated pre-let-7 RNA is not processed by Dicer and undergo degradation. Pre-let-7 uridylation is strongly enhanced in the presence of LIN28A. Due to functional redundancy between ZCCHC6 and ZCCHC11, the identification of the specific role of each of these proteins is difficult. Involved in microRNA (miRNA)-induced gene silencing through uridylation of deadenylated miRNA targets. Also functions as an integral regulator of microRNA biogenesiS using 3 different uridylation mechanisms. Acts as a suppressor of miRNA biogenesis by mediating the terminal uridylation of some miRNA precursors, including that of let-7 (pre-let-7). Uridylated pre-let-7 RNA is not processed by Dicer and undergo degradation. Pre-let-7 oligouridylation is strongly enhanced in the presence of LIN28A. In the absence of LIN28A, TUT7 and TUT4 monouridylate group II pre-miRNAs, which includes most of pre-let7 members, that shapes an optimal 3' end overhang for efficient processing. Add oligo-U tails to truncated pre-miRNAS with a 5' overhang which may promote rapid degradation of non-functional pre-miRNA species. Does not play a role in replication-dependent histone mRNA degradation. Due to functional redundancy between TUT4 and TUT7, the identification of the specific role of each of these proteins is difficult. TUT4 and TUT7 restrict retrotransposition of long interspersed element-1 (LINE-1) in cooperation with MOV10 counteracting the RNA chaperonne activity of L1RE1. TUT7 uridylates LINE-1 mRNAs in the cytoplasm which inhibits initiation of reverse transcription once in the nucleus, whereas uridylation by TUT4 destabilizes mRNAs in cytoplasmic ribonucleoprotein granules. The polypeptide is Terminal uridylyltransferase 7 (Mus musculus (Mouse)).